The sequence spans 446 residues: Citrate/sodium symporter (446 aa).

A run of 5 helical transmembrane segments spans residues 23 to 43, 46 to 66, 79 to 99, 110 to 130, and 148 to 168; these read IFGM…LSHF, AIPT…AIFG, IGGA…AGIF, VMDK…GAIL, and ILAG…CFGI. Positions 181 and 183 each coordinate Na(+). Asn-186 and Gly-187 together coordinate citrate. The next 5 helical transmembrane spans lie at 213 to 233, 267 to 287, 289 to 309, 335 to 355, and 364 to 384; these read IAIL…LDMI, ETAV…VVAK, ILPS…LIVA, QLLW…QEII, and VIAA…GWLI. Na(+) is bound by residues Met-399 and Asn-401. Citrate contacts are provided by Arg-402, Gly-404, Ser-405, and Arg-428. A helical transmembrane segment spans residues 425-445; that stretch reads ISSRLGGGIVLVIASIVFSMM.

This sequence belongs to the 2-hydroxycarboxylate transporter (2-HCT) (TC 2.A.24) family. Homodimer.

It localises to the cell inner membrane. The catalysed reaction is citrate(out) + 2 Na(+)(out) = citrate(in) + 2 Na(+)(in). Functionally, secondary active transporter that catalyzes the uptake of citrate across the membrane with the concomitant uptake of sodium. Is specific for citrate. This chain is Citrate/sodium symporter, found in Salmonella pullorum.